The sequence spans 182 residues: Large ribosomal subunit protein bL25 (182 aa).

Belongs to the bacterial ribosomal protein bL25 family. CTC subfamily. As to quaternary structure, part of the 50S ribosomal subunit; part of the 5S rRNA/L5/L18/L25 subcomplex. Contacts the 5S rRNA. Binds to the 5S rRNA independently of L5 and L18.

This is one of the proteins that binds to the 5S RNA in the ribosome where it forms part of the central protuberance. The chain is Large ribosomal subunit protein bL25 from Borreliella afzelii (strain PKo) (Borrelia afzelii).